A 101-amino-acid chain; its full sequence is Interleukin-8 (101 aa).

Positions 1–22 (MTSKLVVALLAAFMLSAALCEA) are cleaved as a signal peptide. Arg27 carries the post-translational modification Citrulline. Cystine bridges form between Cys34-Cys61 and Cys36-Cys77.

It belongs to the intercrine alpha (chemokine CxC) family. As to quaternary structure, homodimer. Interacts with TNFAIP6 (via Link domain); this interaction interferes with chemokine binding to glycosaminoglycans. In terms of processing, citrullination at Arg-27 prevents proteolysis, and dampens tissue inflammation, it also enhances leukocytosis, possibly through impaired chemokine clearance from the blood circulation.

It localises to the secreted. Its function is as follows. Chemotactic factor that mediates inflammatory response by attracting neutrophils, basophils, and T-cells to clear pathogens and protect the host from infection. Also plays an important role in neutrophil activation. Released in response to an inflammatory stimulus, exerts its effect by binding to the G-protein-coupled receptors CXCR1 and CXCR2, primarily found in neutrophils, monocytes and endothelial cells. G-protein heterotrimer (alpha, beta, gamma subunits) constitutively binds to CXCR1/CXCR2 receptor and activation by IL8 leads to beta and gamma subunits release from Galpha (GNAI2 in neutrophils) and activation of several downstream signaling pathways including PI3K and MAPK pathways. This is Interleukin-8 (CXCL8) from Felis catus (Cat).